The sequence spans 129 residues: Glycine cleavage system H protein (129 aa).

In terms of domain architecture, Lipoyl-binding spans 24-106; sequence TYTVGITEHA…YAGGWIFKIK (83 aa). At K65 the chain carries N6-lipoyllysine.

This sequence belongs to the GcvH family. In terms of assembly, the glycine cleavage system is composed of four proteins: P, T, L and H. The cofactor is (R)-lipoate.

In terms of biological role, the glycine cleavage system catalyzes the degradation of glycine. The H protein shuttles the methylamine group of glycine from the P protein to the T protein. In Shigella dysenteriae serotype 1 (strain Sd197), this protein is Glycine cleavage system H protein.